Reading from the N-terminus, the 255-residue chain is Shieldin complex subunit 3 (255 aa).

Residues Gln33–Ser88 form a sufficient for interaction with MAD2L2 region. The interval Gln116–Arg135 is disordered.

As to quaternary structure, component of the shieldin complex, consisting of SHLD1, SHLD2, SHLD3 and MAD2L2/REV7. Within the complex, SHLD2 forms a scaffold which interacts with a SHLD3-MAD2L2 subcomplex via its N-terminus, and with SHLD1 via its C-terminus. Interacts with ASTE1.

The protein localises to the chromosome. Functionally, component of the shieldin complex, which plays an important role in repair of DNA double-stranded breaks (DSBs). During G1 and S phase of the cell cycle, the complex functions downstream of TP53BP1 to promote non-homologous end joining (NHEJ) and suppress DNA end resection. Mediates various NHEJ-dependent processes including immunoglobulin class-switch recombination, and fusion of unprotected telomeres. In Mus musculus (Mouse), this protein is Shieldin complex subunit 3.